Here is a 480-residue protein sequence, read N- to C-terminus: Glutamate--tRNA ligase (480 aa).

Positions 21–31 match the 'HIGH' region motif; that stretch reads PSPTGYLHVGG. 4 residues coordinate Zn(2+): Cys110, Cys112, Cys137, and His139. The 'KMSKS' region motif lies at 248–252; sequence KLSKR. ATP is bound at residue Lys251.

It belongs to the class-I aminoacyl-tRNA synthetase family. Glutamate--tRNA ligase type 1 subfamily. As to quaternary structure, monomer. Zn(2+) is required as a cofactor.

Its subcellular location is the cytoplasm. The catalysed reaction is tRNA(Glu) + L-glutamate + ATP = L-glutamyl-tRNA(Glu) + AMP + diphosphate. Its function is as follows. Catalyzes the attachment of glutamate to tRNA(Glu) in a two-step reaction: glutamate is first activated by ATP to form Glu-AMP and then transferred to the acceptor end of tRNA(Glu). The polypeptide is Glutamate--tRNA ligase (Histophilus somni (strain 2336) (Haemophilus somnus)).